The chain runs to 424 residues: Enolase (424 aa).

(2R)-2-phosphoglycerate is bound at residue Gln165. Catalysis depends on Glu207, which acts as the Proton donor. Positions 244, 283, and 310 each coordinate Mg(2+). Residues Lys335, Arg364, Ser365, and Lys386 each coordinate (2R)-2-phosphoglycerate. Residue Lys335 is the Proton acceptor of the active site.

It belongs to the enolase family. Requires Mg(2+) as cofactor.

Its subcellular location is the cytoplasm. The protein localises to the secreted. It is found in the cell surface. It catalyses the reaction (2R)-2-phosphoglycerate = phosphoenolpyruvate + H2O. The protein operates within carbohydrate degradation; glycolysis; pyruvate from D-glyceraldehyde 3-phosphate: step 4/5. In terms of biological role, catalyzes the reversible conversion of 2-phosphoglycerate (2-PG) into phosphoenolpyruvate (PEP). It is essential for the degradation of carbohydrates via glycolysis. The protein is Enolase of Chlamydia caviae (strain ATCC VR-813 / DSM 19441 / 03DC25 / GPIC) (Chlamydophila caviae).